Reading from the N-terminus, the 416-residue chain is Phosphoglycerate kinase (416 aa).

Residues valine 22, aspartate 23, phenylalanine 24, asparagine 25, glutamine 37, arginine 38, serine 61, histidine 62, glycine 64, arginine 65, leucine 120, arginine 121, histidine 168, and arginine 169 each contribute to the (2R)-3-phosphoglycerate site. Glycine 212 is a binding site for ADP. Glycine 212 lines the CDP pocket. Residues alanine 213 and lysine 214 each contribute to the AMP site. Alanine 213 contributes to the ATP binding site. Residue alanine 213 coordinates Mg(2+). Residue aspartate 217 participates in CDP binding. Aspartate 217 contacts Mg(2+). Residue lysine 218 coordinates AMP. Residue lysine 218 participates in ATP binding. Glycine 236 provides a ligand contact to ADP. Glycine 236 contacts CDP. The AMP site is built by glycine 237 and glycine 311. ATP contacts are provided by glycine 237 and glycine 311. Glycine 336 and phenylalanine 341 together coordinate CDP. Phenylalanine 341 serves as a coordination point for ADP. An AMP-binding site is contributed by glutamate 342. Residues glutamate 342, aspartate 373, and threonine 374 each coordinate ATP. Aspartate 373 contributes to the Mg(2+) binding site.

Belongs to the phosphoglycerate kinase family. Monomer. Mg(2+) is required as a cofactor. As to expression, expressed in all cells of the worm (at protein level), higher expression in the cells associated with the tubercles (tegumental modifications), the muscle and along the tegument.

The catalysed reaction is (2R)-3-phosphoglycerate + ATP = (2R)-3-phospho-glyceroyl phosphate + ADP. It functions in the pathway carbohydrate degradation; glycolysis; pyruvate from D-glyceraldehyde 3-phosphate: step 2/5. Its function is as follows. Involved in the seventh step in glycolysis. Catalyzes the conversion of 1,3-bisphosphoglycerate ((2R)-3-phospho-glyceroyl phosphate) to 3-phosphoglycerate ((2R)-3-phosphoglycerate) and results in the formation of ATP. Associated with the tegument to provide the energy needed for the tegumental repair resulting from immune damage. The chain is Phosphoglycerate kinase (PGK) from Schistosoma mansoni (Blood fluke).